Consider the following 345-residue polypeptide: Ferredoxin--NADP reductase (345 aa).

FAD is bound by residues D38, Q46, Y51, V91, F129, D295, and T336.

This sequence belongs to the ferredoxin--NADP reductase type 2 family. In terms of assembly, homodimer. FAD serves as cofactor.

It carries out the reaction 2 reduced [2Fe-2S]-[ferredoxin] + NADP(+) + H(+) = 2 oxidized [2Fe-2S]-[ferredoxin] + NADPH. The chain is Ferredoxin--NADP reductase from Rhodospirillum rubrum (strain ATCC 11170 / ATH 1.1.1 / DSM 467 / LMG 4362 / NCIMB 8255 / S1).